Here is a 567-residue protein sequence, read N- to C-terminus: Urease subunit alpha (567 aa).

The region spanning 129–567 is the Urease domain; that stretch reads GGIDTHIHWI…LPMAQRYFLF (439 aa). 3 residues coordinate Ni(2+): H134, H136, and K217. The residue at position 217 (K217) is an N6-carboxylysine. A substrate-binding site is contributed by H219. Residues H246 and H272 each coordinate Ni(2+). The active-site Proton donor is H320. A Ni(2+)-binding site is contributed by D360.

The protein belongs to the metallo-dependent hydrolases superfamily. Urease alpha subunit family. In terms of assembly, heterotrimer of UreA (gamma), UreB (beta) and UreC (alpha) subunits. Three heterotrimers associate to form the active enzyme. It depends on Ni cation as a cofactor. In terms of processing, carboxylation allows a single lysine to coordinate two nickel ions.

Its subcellular location is the cytoplasm. It catalyses the reaction urea + 2 H2O + H(+) = hydrogencarbonate + 2 NH4(+). The protein operates within nitrogen metabolism; urea degradation; CO(2) and NH(3) from urea (urease route): step 1/1. This is Urease subunit alpha from Enterobacter sp. (strain 638).